Here is a 376-residue protein sequence, read N- to C-terminus: Putative glutamate--cysteine ligase 2 (376 aa).

This sequence belongs to the glutamate--cysteine ligase type 2 family. YbdK subfamily.

The enzyme catalyses L-cysteine + L-glutamate + ATP = gamma-L-glutamyl-L-cysteine + ADP + phosphate + H(+). ATP-dependent carboxylate-amine ligase which exhibits weak glutamate--cysteine ligase activity. This chain is Putative glutamate--cysteine ligase 2, found in Paracoccus denitrificans (strain Pd 1222).